The chain runs to 116 residues: Iron-sulfur cluster insertion protein ErpA (116 aa).

Positions 44, 108, and 110 each coordinate iron-sulfur cluster.

This sequence belongs to the HesB/IscA family. As to quaternary structure, homodimer. The cofactor is iron-sulfur cluster.

Its function is as follows. Required for insertion of 4Fe-4S clusters for at least IspG. This chain is Iron-sulfur cluster insertion protein ErpA, found in Shewanella amazonensis (strain ATCC BAA-1098 / SB2B).